Here is a 737-residue protein sequence, read N- to C-terminus: MEDAGEDPTTFAAHSLPSDPRLLATVTNAYLGTRVFHDTLHVSGVYNGAGGDTHRAMLPSPLNVRLEAPAGMGEQLTETFALDTNTGSFLHTLEGPRFRASQCIYAHRTLPHVLAFRVSIARLAPGSGPITLLLRSAFSPESPDLDLHQGPDFQGARYLYGHTLTPEQPGGPQQEVHMLWTPAPPDLTLGEGEEARTWDFLTAVGGSQAEAQACLTEALQLQARGALYTAHAQAWAQLWVECGLDVVGPLQLRQALRGSLYYLLSALPQPKAPGYICHGLSPGGLSNGSREECYWGHVFWDQDLWMFPSILMFHPEAARAILEYRIRTLDGALENAQNLGYQGAKFAWESADSGLEVCPEDIYGVQEVHVNGAVVLAFELYYHTTQDLQLFREAGGWDVVRAVAEFWCSRVEWSPREEKYHLRGVMSPDEYHSGVNNSVYTNVLVQNSLRFAAALAQDLGLPIPSQWLAVADKIKVPFDVEQNFHPEFDGYEPGEVVKQADVVLLGYPVPFSLSPDVRRKNLEIYEAVTSPQGPAMTWSMFAVGWMELKDAVRARGLLDRSFANMAEPFKVWTENADGSGAVNFLTGMGGFLQAVVFGCTGFRVTRAGVTFDPVCLSGISRVSVSGIFYQGNKLNFSFSEDSVTVEVTARAGPWAPHLEAELWPSQSRLSLLPGHKVSFPRSAGRIQMSPPKLPGSSSSEFPGRTFSDVRDPLQSPLWVTLGSSSPTESLTVDPASE.

300 to 301 (WD) contributes to the substrate binding site. Glu-430 acts as the Proton donor in catalysis. Residue 498–499 (KQ) coordinates substrate. The tract at residues 681 to 737 (RSAGRIQMSPPKLPGSSSSEFPGRTFSDVRDPLQSPLWVTLGSSSPTESLTVDPASE) is disordered. Over residues 721 to 730 (LGSSSPTESL) the composition is skewed to polar residues.

It belongs to the glycosyl hydrolase 65 family.

The catalysed reaction is (5R)-5-O-[alpha-D-glucosyl-(1-&gt;2)-beta-D-galactosyl]-5-hydroxy-L-lysyl-[collagen] + H2O = (5R)-5-O-(beta-D-galactosyl)-5-hydroxy-L-lysyl-[collagen] + D-glucose. In terms of biological role, catalyzes the hydrolysis of glucose from the disaccharide unit linked to hydroxylysine residues of collagen and collagen-like proteins. This Homo sapiens (Human) protein is Protein-glucosylgalactosylhydroxylysine glucosidase.